An 820-amino-acid chain; its full sequence is MDTEGFGELLQQAEQLAAETEAVSELPHVERNLQEIQQAGERLRSRTLTRTSQDTADVKASILLGSRGLDIFHISQRLESLSAATTFEPLEPVKDTDIQGFLKNERDNALLSAIEESRRRTFLLAEEYHRDSMLVQWEQVKQRVLHTLLGAGEDALDFSQEVEPSFVSEVGVPGRSALDSVEVAYSRQIYVFNEKIVNGHLQPNLGDLCASVAESLDDKNVSEMWLMVKQMTDVLLVPAKDTLKSRVSVDMQMAFVRQALQFLENSYKNYTLVTVFGNLHQAQLGGVPGTYQLVCSFLNIKLPTPLPGRQDGEVEGHPVWALIYFCLRCGDLSAAMQVVNKAQHQLGDFKIWFQEYMNSPDRRLSPATENKLRLHYRRVLRNSADPYKRAVYCLIGKCDIGDNHGEVADKTEDYLWLKLNQVCFDEDGSSSPQDRMTLAQLQKQLLEDYGESHFSASHQPFLYFQVLFLTAQFEAAIAFLFRVERLRSHAVHVALVLYELKLLLKSSGQSAQLLSQEAGDPPMVRRLNFIRLLMLYTRKFESTDPREALQYFYFLRNEKDSQGENMFMRCVSELVIESREFDMLLGRLEKDGSRKPGVIDKFAGDTRAIITKVASEAENKGLFEEAVKLYELAKNADKVLELMNKLLSPVIAQVSEPQSNKERLKNMAVAIAERYRANGVAGEKSVDNTFYLLLDLMTFFDEYHAGHIDRAYDVIERLKLVPLSQDSVEERVAAFRNFSDEVRHNLSEVLLATMNILFTQYKRLKGAAAGTPGRPQRTLEDRDMLLRIQARALITFAGMIPYRMAGDTNARLVQMEVLMN.

This sequence belongs to the nucleoporin interacting component (NIC) family.

It localises to the nucleus membrane. The protein resides in the nucleus. Its subcellular location is the nuclear pore complex. In terms of biological role, plays a role in the nuclear pore complex (NPC) assembly and/or maintenance. The protein is Nuclear pore complex protein Nup93 (dye) of Danio rerio (Zebrafish).